A 74-amino-acid polypeptide reads, in one-letter code: Putative membrane protein insertion efficiency factor (74 aa).

The protein belongs to the UPF0161 family.

The protein localises to the cell inner membrane. In terms of biological role, could be involved in insertion of integral membrane proteins into the membrane. This chain is Putative membrane protein insertion efficiency factor, found in Leptospira interrogans serogroup Icterohaemorrhagiae serovar copenhageni (strain Fiocruz L1-130).